The primary structure comprises 97 residues: MNIRPLHDRVIVKRKEVESKSAGGIVLTGSAAGKSTRGEIIAVGKGRVLENGNTQPLDVKIGDTVIFNDGYGVKVEKIDNQDMLIMSESDILAIVEA.

It belongs to the GroES chaperonin family. Heptamer of 7 subunits arranged in a ring. Interacts with the chaperonin GroEL.

It is found in the cytoplasm. Functionally, together with the chaperonin GroEL, plays an essential role in assisting protein folding. The GroEL-GroES system forms a nano-cage that allows encapsulation of the non-native substrate proteins and provides a physical environment optimized to promote and accelerate protein folding. GroES binds to the apical surface of the GroEL ring, thereby capping the opening of the GroEL channel. This is Co-chaperonin GroES from Buchnera aphidicola subsp. Tuberolachnus salignus.